The primary structure comprises 168 residues: Endoribonuclease YbeY (168 aa).

Zn(2+)-binding residues include H132, H136, and H142.

Belongs to the endoribonuclease YbeY family. Zn(2+) is required as a cofactor.

It localises to the cytoplasm. In terms of biological role, single strand-specific metallo-endoribonuclease involved in late-stage 70S ribosome quality control and in maturation of the 3' terminus of the 16S rRNA. This chain is Endoribonuclease YbeY, found in Clostridium perfringens (strain SM101 / Type A).